The primary structure comprises 86 residues: Late effector protein 1 (86 aa).

A signal peptide spans 1-24 (MRSHQMAAFFAVSLMMMVVLGALS).

The protein belongs to the lep1 family. In terms of assembly, interacts at the cell wall with secreted rep1 repellent peptides.

It is found in the secreted. The protein localises to the cell wall. Core effector contributing to spore formation and tumor formation at the host plant. Modulates surface hydrophobicity promoting cell-cell or cell-surface contacts. Lep1 and rep1 interact in aerial hyphae to form a strong hydrophobic layer. Plays a crucial role in hyphal aggregation that might be a prerequisite for strong proliferation of diploid cells and for induction of the morphological changes associated with spore formation. The protein is Late effector protein 1 of Mycosarcoma maydis (Corn smut fungus).